The primary structure comprises 194 residues: Cysteine and glycine-rich protein 2 (194 aa).

The LIM zinc-binding 1 domain occupies 10–61 (CGACGRTVYHAEEVQCDGRSFHRCCFLCMVCRKNLDSTTVAIHDAEVYCKSC). The Nuclear localization signal signature appears at 64 to 69 (KKYGPK). The disordered stretch occupies residues 85 to 110 (GERLGIKPESSPSPHRPTTNPNTSKF). Residues 94-110 (SSPSPHRPTTNPNTSKF) are compositionally biased toward polar residues. The LIM zinc-binding 2 domain occupies 120–171 (CSRCGDSVYAAEKVIGAGKPWHKNCFRCAKCGKSLESTTLTEKEGEIYCKGC).

It localises to the nucleus. Functionally, interacts with zyxin. May be a component of a signal transduction pathway that mediates adhesion-stimulated changes in gene expression. Totally down-regulated in transformed cells. This chain is Cysteine and glycine-rich protein 2 (CSRP2), found in Coturnix japonica (Japanese quail).